The chain runs to 1890 residues: METGPNAEIELLERVLLRLGNADSDEKLEAAVGKFLTPVILKMNSPHNVVRTKVVEVLTHIKRRLSSRGHVQIPVEALLDQYAAQDSSTFLKNFAIIFITMGFPRLALEQQTALASKVVGCEDKLESYQDKLFALLLPVLSDMKIPDDPTQRSKLLDLQDKPAICANFLALLQDVLLLPYGITQEQDVPPGLSPYSFTRIIAYNWRAEELEKVKKGIVRFLCASVFSDLQIFVPLVVASADTRFSVATPAITELSKLCTMLDFSNPAVTAPLYTLFAGNQSKITDRQTRPCCARVRQKLLQYLIKCRGKSINVTKGLQVTFDGFFGTNTNQKCKVLALQFMELLLRDGPRELVSKVSKVILTGITKIIGRDSNEPNDVQNAAYSALAQHARSFPQDVSQDLKLVLGYFNNLASCAPELHSSIREALVSMAPAFAWKTKEKSDAMEVDKNVDSSSVKLDGQQHLLLAMLLDNAESKVQIVQNVTSVFLTSCYPEYYAPARYLLLLIAGERNSLRENVTTYLYGTSKKDHINYSMLSSIDHSKNRISSESISDFNHLSLEQRRVMLPSFQVMMSHVHEMAEKRLKKNTACVVVGRTKLPYSLEVYEELLDYLRLCLWYSAGVVAAPGDEKYTHELREYITLHYEDTEDNALHQYAQFVQRSVEAKRSESNLICLYDLLNAAPELFAAKQLHLLEPLGNTLKDVSETMRINVAQVYGILWAFGLSDEKFDEEVGECLNSLTQKTLEHKHGWLLVVGHTFNRKIAMLKQENKTKDFAAWPQFVNAVKIISKCLCESQWLLVSAAVKCISMIGKAVEIPNVPVEIQVPSKDGDDDDEEMTEYTSIDSSTKLVIFGVVFQLLRSSSARQKIREDSARCLGYLAIGDGEHFTKRNLDKFLTLTKIQKDAALNIAISEAIVNTLCGYDVNKGQPDEKFVNKHCNDDDFDQFLNSLIRLVTDPNPHSRQAISVWLLAVVKHCSQRPAVLAKKELLQFAFTELLSDDSEFVQDVASRGLGLVYSISDSGSQSDLANSLLDQLIGGKRKVNQVTADTELFAEGMLGKTPTGGNITTYKELCSLASDLNQPDMIYQFMQLANHNATWTSKLGAAFGLKTLSAESRQKMEPYLGKIIPRLYRYKYDPTPKIQNSMISIWDTIVTDSKEVTERYYWEILRELLDNLTCKEWRVRIACCLAVRDLLNRPNGLKLRSEEPVRRALPDNSMEVDEVPEPELKELWFQLFRVMDDIHEGTRVAAHGTASFLGKLCVIASSSDHGKSGTAVASSILPFLLETGVGHKVPEIRRVSIKTISDMIDSSGSLIAPHLATLIPCLLRATGELENTKLSYVSTRLGADNEAQEAVDTLRAEAAKSLHTMETIGKCVRYIDYSVLEKMTPEVLELMKGSVNLGTKIGCAHFVCLISIRLGKEMTPLVGKYIRACFVGIKNRNATVRKYNASAIGHLLGLAKEQSIKSLFTKLEELYAEQPGNRSIALTIQSINKRHHELLKDYMDSMLPLIFFAMHEEPNEETKANVELWKDLWHDVSPGDAGIRLNLNVIIPKLESSLTDASWSRKAQAANAIQTIATRLSSSLDEPDRLRLIKLLLSGLQGRTFEGKERLLQALAALTKGLDRNHQICSSIIDAAMREARKREPVYRTMALASLGEILDQLEADRFEEVYNMSWNLLEKKELRKESDDEDEPNTSQELSADERNKRAQTLNRLKEVVWETLGKSWPRHSIETQHRYQLFFAENCTSILAESTRPVQVSLLAALTKYIERLHVFDESAQVPDLTQINQEKKIKTEETAPKTREAIVEKICTDVLAAVALAAGVPHSGLKKEALNIVLMLIKRLSGSGNGNQQPLRLIKQSFESNLEKFQRDSAPEIRCRIKDIEDKLSKLNPQN.

18 HEAT repeats span residues 6-29, 30-67, 130-167, 226-263, 294-330, 334-354, 355-395, 459-496, 498-523, 524-561, 565-602, 685-722, 776-813, 843-882, 938-975, 980-1018, 1118-1155, and 1159-1196; these read NAEI…EKLE, AAVG…RLSS, DKLF…ICAN, FSDL…MLDF, RVRQ…TNTN, KVLA…ELVS, KVSK…SFPQ, GQQH…EYYA, ARYL…LYGT, SKKD…EQRR, PSFQ…SLEV, AKQL…FGLS, PQFV…AVEI, STKL…GDGE, DDFD…HCSQ, LAKK…ISDS, PYLG…DSKE, and RYYW…RPNG. Residue S1213 is modified to Phosphoserine. 8 HEAT repeats span residues 1271–1309, 1313–1350, 1378–1415, 1416–1457, 1497–1534, 1541–1578, 1583–1620, and 1623–1660; these read AVAS…SSGS, PHLA…AQEA, SVLE…IRLG, KEMT…LAKE, DYMD…DVSP, LNLN…RLSS, PDRL…GLDR, and QICS…QLEA. The segment at 1680–1702 is disordered; that stretch reads RKESDDEDEPNTSQELSADERNK. Residue S1683 is modified to Phosphoserine. Phosphothreonine is present on T1691. S1692 bears the Phosphoserine mark. HEAT repeat units follow at residues 1751-1788 and 1826-1863; these read PVQV…EKKI and KEAL…NLEK.

As to quaternary structure, associated with the proteasome.

The protein localises to the cytoplasm. This Drosophila melanogaster (Fruit fly) protein is Proteasome-associated protein ECM29 homolog.